The following is a 526-amino-acid chain: MGVEHELVVVDEFDALSIELKRPNGSSSSSPSRAVSVEKYPAKTHARKVADKLGVDKGLIYLQGKPTTTYEDSDMEPPFRQRRYFYYMSGADFPNAHLTYDVATDQLLLWIPTRQPREELYLGRIPSREDCMSRLDVDDCRDVVQMTRFIAAHLKHHPGTTLFLLHSDQAPGLDDLPVQYAGRRLDIGRLRLAVDAARVIKTPFEIRQIRRANQVSSEAHRAVLRQIRHLRTEADVEAVFVAACRVRGARSQAYNPIAGAGANAATLHYVDNAAPLKGKQTLVLDAGCEWDCYASDITRTMPAAGRKFSPEAQTIYRIVEKMQNACIDLVRPGVSYLFIQATAQLVAIEEFLKIGLLVGDKAKIAASRVVSAFFPHGLGHHVGLETHDVRSERLLGYDKSSAALWRGKRLVMSVEQCDRVAELMVTARQQGADARDALAEGMVITIEPGIYFNRQYIEAFCSDVPERGSFINKSVLDRYYPVGGVRIEDDILVTADGYENLTTAPKGEEALRIINGDDVEADAVLV.

Residues Asp285, Asp296, Glu447, and Glu488 each contribute to the Mn(2+) site.

It belongs to the peptidase M24B family. The cofactor is Mn(2+).

The catalysed reaction is Release of any N-terminal amino acid, including proline, that is linked to proline, even from a dipeptide or tripeptide.. Functionally, catalyzes the removal of a penultimate prolyl residue from the N-termini of peptides. This Pyricularia oryzae (strain 70-15 / ATCC MYA-4617 / FGSC 8958) (Rice blast fungus) protein is Probable Xaa-Pro aminopeptidase MGG_05684.